The following is a 248-amino-acid chain: Probable transcriptional regulatory protein Acid345_2125 (248 aa).

This sequence belongs to the TACO1 family.

The protein localises to the cytoplasm. The polypeptide is Probable transcriptional regulatory protein Acid345_2125 (Koribacter versatilis (strain Ellin345)).